Consider the following 1117-residue polypeptide: Leucine-rich repeats and immunoglobulin-like domains protein 3 (1117 aa).

The N-terminal stretch at 1–24 (MGAPGLRAATAALGLLLCAGLGRA) is a signal peptide. Positions 38-74 (LLDDDAQRPCPAACHCLGDLLDCSRRRLVRLPDPLPA) constitute an LRRNT domain. LRR repeat units lie at residues 75–98 (WVTRLDLSHNRLSFIQTSSLSHLQ), 99–120 (SLQEVKLNNNELETIPNLGSIS), 122–143 (NIRQLSLAGNAIDKILPEQLEA), 146–168 (SLETLDLSNNNISELRTAFPPLQ), 169–189 (LKYLYINNNRVSSMEPGYFDN), 193–214 (TLLVLKLNRNRISAIPPKMFKL), 216–237 (QLQHLELNRNKIKNVDGLTFQG), 240–261 (ALKSLKMQRNGVTKLMDGAFWG), 264–285 (NMEVLQLDHNNLTEITKGWLYG), 288–309 (MLRELHLSQNAINRISPDAWEF), 312–333 (KLSELDLTFNHLSRLDDSSFLG), 336–357 (LLNALHIGNNKVSYIADCAFRG), 360–382 (SLKTLDLRNNEISWTIEDMSGAF), 387–408 (RLRQLILQGNRIRSITKKAFAG), and 411–432 (TLEHLDLSGNAIMSLQSNAFSQ). N-linked (GlcNAc...) asparagine glycosylation occurs at asparagine 156. N-linked (GlcNAc...) asparagine glycosylation is present at asparagine 274. 2 N-linked (GlcNAc...) asparagine glycosylation sites follow: asparagine 442 and asparagine 469. Positions 444-495 (SSLLCDCQLRWLPQWVAENNFQSFVNASCAHPQLLKGRSIFTVSPDGFVCDD) constitute an LRRCT domain. Ig-like C2-type domains lie at 499-598 (PQIT…AKLT), 603-692 (PSFT…ATLT), and 697-783 (PSFL…VRLS). Disulfide bonds link cysteine 520-cysteine 581 and cysteine 624-cysteine 676. 2 N-linked (GlcNAc...) asparagine glycosylation sites follow: asparagine 688 and asparagine 729. A disulfide bridge links cysteine 718 with cysteine 767. The chain crosses the membrane as a helical span at residues 810-830 (VVIIAVVCCVVGTSLVWVVII). Asparagine 1014 carries N-linked (GlcNAc...) asparagine glycosylation. The tract at residues 1019–1093 (DFSTGPEPGS…KERTDFREEN (75 aa)) is disordered. A compositionally biased stretch (basic and acidic residues) spans 1083–1093 (DKERTDFREEN).

Interacts with EGFR, ERBB2 and ERBB4 (in vitro). As to expression, widely expressed.

The protein localises to the cell membrane. The protein resides in the cytoplasmic vesicle membrane. Functionally, plays a role in craniofacial and inner ear morphogenesis during embryonic development. Acts within the otic vesicle epithelium to control formation of the lateral semicircular canal in the inner ear, possibly by restricting the expression of NTN1. The protein is Leucine-rich repeats and immunoglobulin-like domains protein 3 (Lrig3) of Mus musculus (Mouse).